The sequence spans 61 residues: Large ribosomal subunit protein bL32 (61 aa).

Basic residues predominate over residues 1–19 (MAHPKRRQSKTRTAKRRTH). Residues 1 to 20 (MAHPKRRQSKTRTAKRRTHD) are disordered.

The protein belongs to the bacterial ribosomal protein bL32 family.

The sequence is that of Large ribosomal subunit protein bL32 from Porphyromonas gingivalis (strain ATCC 33277 / DSM 20709 / CIP 103683 / JCM 12257 / NCTC 11834 / 2561).